A 598-amino-acid polypeptide reads, in one-letter code: Probable ATP-dependent RNA helicase DDX52 (598 aa).

Residue Lys15 is modified to N6-acetyllysine. Ser39 carries the post-translational modification Phosphoserine. A disordered region spans residues 59-98; the sequence is CGGLQTQQELQNEETTEGGLLERSKEPKKKKRKKMTADVP. The Q motif motif lies at 166–194; the sequence is QLDQEYKISPRLLQNILDAGFQVPTPIQM. A Helicase ATP-binding domain is found at 197 to 375; sequence IPVMLHGREL…KLNLDNIVSV (179 aa). 210–217 lines the ATP pocket; sequence APTGSGKT. Residues 319 to 322 carry the DEAD box motif; that stretch reads DESD. One can recognise a Helicase C-terminal domain in the interval 386–547; that stretch reads TVEQELLFVG…PVPEYIKGFQ (162 aa). Residues 578–598 form a disordered region; it reads AKQKKVAGQNSKKKETLKGKS. Residues 589–598 are compositionally biased toward basic and acidic residues; that stretch reads KKKETLKGKS.

It belongs to the DEAD box helicase family. DDX52/ROK1 subfamily.

It localises to the nucleus. The protein resides in the nucleolus. The catalysed reaction is ATP + H2O = ADP + phosphate + H(+). In terms of biological role, required for efficient ribosome biogenesis. May control cell cycle progression by regulating translation of mRNAs that contain a terminal oligo pyrimidine (TOP) motif in their 5' UTRs, such as GTPBP4. In Rattus norvegicus (Rat), this protein is Probable ATP-dependent RNA helicase DDX52 (Ddx52).